The sequence spans 600 residues: UvrABC system protein C (600 aa).

The region spanning 15 to 92 (EKPGCYLMKD…IKKYQPYYNV (78 aa)) is the GIY-YIG domain. One can recognise a UVR domain in the interval 197–232 (GAVKQDLTQKMEQASEQLEFERAAEIRDQLKYIEET).

The protein belongs to the UvrC family. In terms of assembly, interacts with UvrB in an incision complex.

Its subcellular location is the cytoplasm. Functionally, the UvrABC repair system catalyzes the recognition and processing of DNA lesions. UvrC both incises the 5' and 3' sides of the lesion. The N-terminal half is responsible for the 3' incision and the C-terminal half is responsible for the 5' incision. The chain is UvrABC system protein C from Lactobacillus helveticus (strain DPC 4571).